The sequence spans 561 residues: Mercuric reductase (561 aa).

One can recognise an HMA domain in the interval Met1 to Thr65. Residues Cys11 and Cys14 each coordinate a metal cation. Positions 110, 130, and 135 each coordinate FAD. Cys136 and Cys141 form a disulfide bridge. Lys145, Ala211, Asp403, and Val411 together coordinate FAD. The Hg(2+) site is built by Cys558 and Cys559.

Belongs to the class-I pyridine nucleotide-disulfide oxidoreductase family. In terms of assembly, homodimer. FAD serves as cofactor.

It carries out the reaction Hg + NADP(+) + H(+) = Hg(2+) + NADPH. Functionally, resistance to Hg(2+) in bacteria appears to be governed by a specialized system which includes mercuric reductase. MerA protein is responsible for volatilizing mercury as Hg(0). This chain is Mercuric reductase (merA), found in Acinetobacter calcoaceticus.